We begin with the raw amino-acid sequence, 881 residues long: Translation initiation factor IF-2 (881 aa).

Disordered regions lie at residues 31–147 and 165–291; these read KLAQ…TKVP and SVVG…HYDE. Residues 42–55 are compositionally biased toward basic and acidic residues; the sequence is NSSEKPSAKVAEKV. Residues 68–77 show a composition bias toward polar residues; the sequence is ATPESVSSET. The segment covering 114 to 128 has biased composition (acidic residues); that stretch reads VEEEIASSTDSEPEV. Residues 191–203 are compositionally biased toward basic and acidic residues; it reads PKKEDKPAPKERS. Residues 204 to 233 show a composition bias toward polar residues; sequence GQAQAKPQQSSEASSENKPHSPNNNRSSQP. Positions 235 to 267 are enriched in basic and acidic residues; that stretch reads YRRDTSKKPGSDFRDRAKKDDNPKAFTGRDRYG. Basic residues predominate over residues 278 to 287; the sequence is RKKRVQKTKK. The tr-type G domain maps to 387–556; the sequence is IRPPIVAFMG…ALQAEVLELK (170 aa). Residues 396-403 form a G1 region; the sequence is GHVDHGKT. 396 to 403 contributes to the GTP binding site; it reads GHVDHGKT. The tract at residues 421–425 is G2; that stretch reads AITQH. The interval 442–445 is G3; sequence DTPG. GTP-binding positions include 442 to 446 and 496 to 499; these read DTPGH and NKCD. Positions 496-499 are G4; that stretch reads NKCD. Residues 532 to 534 are G5; that stretch reads SAK.

The protein belongs to the TRAFAC class translation factor GTPase superfamily. Classic translation factor GTPase family. IF-2 subfamily.

It is found in the cytoplasm. In terms of biological role, one of the essential components for the initiation of protein synthesis. Protects formylmethionyl-tRNA from spontaneous hydrolysis and promotes its binding to the 30S ribosomal subunits. Also involved in the hydrolysis of GTP during the formation of the 70S ribosomal complex. The sequence is that of Translation initiation factor IF-2 from Chlamydia felis (strain Fe/C-56) (Chlamydophila felis).